The following is a 37-amino-acid chain: Large ribosomal subunit protein bL36 (37 aa).

It belongs to the bacterial ribosomal protein bL36 family.

This is Large ribosomal subunit protein bL36 from Photobacterium profundum (strain SS9).